Here is a 513-residue protein sequence, read N- to C-terminus: EGF-like domain-containing protein 1 (513 aa).

The first 21 residues, 1–21, serve as a signal peptide directing secretion; it reads MMHTFLRRLCVVALCLGYIKA. One can recognise an EGF-like domain in the interval 72 to 108; it reads PTALCGPPCLNGGECYEPTVGTYMCMCPEAFYGNKCE. 3 disulfides stabilise this stretch: Cys-76–Cys-86, Cys-80–Cys-96, and Cys-98–Cys-107. One can recognise a ZP domain in the interval 115-364; it reads ECSGTEITIN…TSCDSVVCPS (250 aa). The disordered stretch occupies residues 356-411; sequence SCDSVVCPSPPQSVPSNPQNIPPANPQNIPPANPQNIPPANPQISPSSSQRKRRAA. Pro residues predominate over residues 375–396; that stretch reads NIPPANPQNIPPANPQNIPPAN. 2 N-linked (GlcNAc...) asparagine glycosylation sites follow: Asn-438 and Asn-503.

In terms of tissue distribution, component of the acid-insoluble organic matrix of calcified layers of the shell (at protein level).

The protein localises to the secreted. This is EGF-like domain-containing protein 1 from Lottia gigantea (Giant owl limpet).